The primary structure comprises 73 residues: Crustacean hyperglycemic hormone (73 aa).

3 cysteine pairs are disulfide-bonded: C7/C43, C23/C39, and C26/C52. The residue at position 73 (V73) is a Valine amide.

This sequence belongs to the arthropod CHH/MIH/GIH/VIH hormone family. As to expression, produced by the medulla terminalis X-organ in the eyestalks and transported to the sinus gland where they are stored and released.

The protein resides in the secreted. Its function is as follows. Hormone found in the sinus gland of isopods and decapods which controls the blood sugar level. Has a secretagogue action over the amylase released from the midgut gland. May act as a stress hormone and may be involved in the control of molting and reproduction. The chain is Crustacean hyperglycemic hormone from Jasus lalandii (Cape rock lobster).